The following is a 187-amino-acid chain: Inosine triphosphate pyrophosphatase (187 aa).

11 to 16 contacts ITP; that stretch reads TSNKNK. Residue glutamate 39 participates in Mg(2+) binding. ITP-binding positions include lysine 51, 67–68, lysine 84, 143–146, lysine 164, and 169–170; these read DT, FGWD, and HR.

Belongs to the HAM1 NTPase family. In terms of assembly, homodimer. It depends on Mg(2+) as a cofactor. Requires Mn(2+) as cofactor.

It localises to the cytoplasm. Its subcellular location is the nucleus. It carries out the reaction ITP + H2O = IMP + diphosphate + H(+). The enzyme catalyses dITP + H2O = dIMP + diphosphate + H(+). The catalysed reaction is XTP + H2O = XMP + diphosphate + H(+). In terms of biological role, pyrophosphatase that hydrolyzes non-canonical purine nucleotides such as inosine triphosphate (ITP), deoxyinosine triphosphate (dITP) or xanthosine 5'-triphosphate (XTP) to their respective monophosphate derivatives. The enzyme does not distinguish between the deoxy- and ribose forms. Probably excludes non-canonical purines from RNA and DNA precursor pools, thus preventing their incorporation into RNA and DNA and avoiding chromosomal lesions. In Aspergillus fumigatus (strain ATCC MYA-4609 / CBS 101355 / FGSC A1100 / Af293) (Neosartorya fumigata), this protein is Inosine triphosphate pyrophosphatase.